Reading from the N-terminus, the 385-residue chain is Trans-enoyl reductase poxH (385 aa).

64 to 67 (QPYS) contacts NADP(+). Residue 156-163 (PDPAAPPI) participates in substrate binding. NADP(+) is bound by residues 199-202 (STSV), 223-226 (SGTD), Y241, and 289-290 (LG). 309 to 313 (HMAPL) lines the substrate pocket. 372–373 (KR) provides a ligand contact to NADP(+).

This sequence belongs to the zinc-containing alcohol dehydrogenase family. As to quaternary structure, monomer.

It participates in secondary metabolite biosynthesis. Its function is as follows. Trans-enoyl reductase; part of the gene cluster that mediates the biosynthesis of oxaleimides, cytotoxic compounds containing an unusual disubstituted succinimide moiety. The first step of the pathway is provided by the HR-PKS poxF that serves in a new mode of collaborative biosynthesis with the PKS-NRPS poxE, by providing the olefin containing amino acid substrate via the synthesis of an ACP-bound dec-4-enoate. The cytochrome P450 monooxygenase poxM-catalyzed oxidation at the alpha-position creates the enzyme-bound 2-hydroxydec-4-enoyl-ACP thioester, which may be prone to spontaneous hydrolysis to yield 2-hydroxydec-4-enoic acid due to increased electrophilicity of the carbonyl. 2-hydroxydec-4-enoic acid can then be further oxidized by poxM to yield the alpha-ketoacid 2-oxodec-4-enoicacid, which is reductively aminated by the aminotransferase poxL to yield (S,E)-2-aminodec-4-enoic acid. The Hybrid PKS-NRPS synthetase poxE then performs condensation between the octaketide product of its PKS modules and the amino group of (S,E)-2-aminodec-4-enoic acid which is activated and incorporated by the adenylation domain. The resulting aminoacyl product can be cyclized by the Diels-Alderase PoxQ and reductively released by the reductive (R) domain of poxE to yield an aldehyde intermediate. The released aldehyde is then substrate for a Knoevenagel condensation by the hydrolyase poxO followed by an oxidation at the 5-position of the pyrrolidone ring. The presence of the olefin from the amino acid building block allows for migration of the substituted allyl group to occur. This allylic transposition reaction takes place in a conjugate addition, semipinacol-like fashion to yield a succinimide intermediate. Iterative two-electron oxidations of the C7 methyl of the succinimide intermediate to the carboxylic acid can be catalyzed by one of two remaining cytochrome P450 monooxygenasess poxC or poxD to yield oxaleimide A. Subsequent oxidation yields the maleimide scaffold oxaleimide I. Both oxaleimide A and oxaleimide I can undergo oxidative modifications in the decalin ring to yield the series of products oxaleimides B to H. This Penicillium oxalicum protein is Trans-enoyl reductase poxH.